Reading from the N-terminus, the 26-residue chain is Aldehyde dehydrogenase beta chain (26 aa).

Heterotrimer composed of an alpha, a beta and a gamma chain. FAD is required as a cofactor.

It catalyses the reaction an aldehyde + a quinone + H2O = a quinol + a carboxylate + H(+). This Amycolatopsis methanolica protein is Aldehyde dehydrogenase beta chain.